Here is a 607-residue protein sequence, read N- to C-terminus: Leucine-rich repeat-containing protein 63 (607 aa).

LRR repeat units follow at residues 357–378 (QLVY…VLYL), 380–401 (NLQV…IQQL), 403–424 (YLRK…LFCL), 426–447 (YLEE…IQKL), 449–470 (SLEK…ILKL), 471–497 (NLVK…NPPR), and 498–524 (LTHI…VVQK).

The protein is Leucine-rich repeat-containing protein 63 (Lrrc63) of Rattus norvegicus (Rat).